We begin with the raw amino-acid sequence, 807 residues long: ATP-binding cassette sub-family F member 1 (807 aa).

The segment at 1-227 (MPKGPKQQPP…KEKAKKAEQM (227 aa)) is disordered. Ser-22 is subject to Phosphoserine. Over residues 29–39 (KKGKKDKKTKK) the composition is skewed to basic residues. The segment covering 47-65 (VEDRQAGEEEKVLKEKEQQ) has biased composition (basic and acidic residues). The span at 73–85 (QKKKRDTRKGRRK) shows a compositional bias: basic residues. At Ser-106 the chain carries Phosphoserine. Phosphoserine; by CK2 is present on residues Ser-110 and Ser-141. Residues 148 to 161 (EKHPPKPAKPEKNR) show a composition bias toward basic and acidic residues. Ser-167 is modified (phosphoserine). Residues 197–207 (LDDEEEQDEEE) are compositionally biased toward acidic residues. The span at 208-227 (IKEKEPPKQGKEKAKKAEQM) shows a compositional bias: basic and acidic residues. Residues 266 to 510 (IKLEKFSISA…MYQQKQKELL (245 aa)) form the ABC transporter 1 domain. Residue 298–305 (GPNGKGKT) coordinates ATP. Over residues 521–542 (KELKAGGKSTKQAEKQTKEALT) the composition is skewed to basic and acidic residues. Residues 521-564 (KELKAGGKSTKQAEKQTKEALTRKQQKCRRKNQDEESQEAPELL) are disordered. Ser-557 is subject to Phosphoserine. An ABC transporter 2 domain is found at 587–802 (LGLHGVTFGY…VLEALGEVMV (216 aa)). 620–627 (GPNGVGKS) is a binding site for ATP.

This sequence belongs to the ABC transporter superfamily. ABCF family. EF3 subfamily. Interacts (via N-terminus) with EIF2S1; the interaction is independent of its phosphorylated status. Associates (via both ABC transporter domains) with the ribosomes. Post-translationally, phosphorylated at phosphoserine and phosphothreonine. Phosphorylation on Ser-110 and Ser-141 by CK2; inhibits association of EIF2 with ribosomes.

The protein localises to the cytoplasm. Its subcellular location is the nucleus. The protein resides in the nucleoplasm. It localises to the nucleus envelope. Required for efficient Cap- and IRES-mediated mRNA translation initiation. Not involved in the ribosome biogenesis. In Sus scrofa (Pig), this protein is ATP-binding cassette sub-family F member 1 (ABCF1).